A 365-amino-acid chain; its full sequence is Cobalt-precorrin-5B C(1)-methyltransferase (365 aa).

This sequence belongs to the CbiD family.

The enzyme catalyses Co-precorrin-5B + S-adenosyl-L-methionine = Co-precorrin-6A + S-adenosyl-L-homocysteine. The protein operates within cofactor biosynthesis; adenosylcobalamin biosynthesis; cob(II)yrinate a,c-diamide from sirohydrochlorin (anaerobic route): step 6/10. Functionally, catalyzes the methylation of C-1 in cobalt-precorrin-5B to form cobalt-precorrin-6A. This Pseudomonas fluorescens (strain ATCC BAA-477 / NRRL B-23932 / Pf-5) protein is Cobalt-precorrin-5B C(1)-methyltransferase.